A 615-amino-acid polypeptide reads, in one-letter code: Dihydroxy-acid dehydratase (615 aa).

A Mg(2+)-binding site is contributed by Asp-81. Position 122 (Cys-122) interacts with [2Fe-2S] cluster. 2 residues coordinate Mg(2+): Asp-123 and Lys-124. N6-carboxylysine is present on Lys-124. Cys-195 contributes to the [2Fe-2S] cluster binding site. Glu-491 contributes to the Mg(2+) binding site. Catalysis depends on Ser-517, which acts as the Proton acceptor.

The protein belongs to the IlvD/Edd family. As to quaternary structure, homodimer. Requires [2Fe-2S] cluster as cofactor. The cofactor is Mg(2+).

The enzyme catalyses (2R)-2,3-dihydroxy-3-methylbutanoate = 3-methyl-2-oxobutanoate + H2O. The catalysed reaction is (2R,3R)-2,3-dihydroxy-3-methylpentanoate = (S)-3-methyl-2-oxopentanoate + H2O. The protein operates within amino-acid biosynthesis; L-isoleucine biosynthesis; L-isoleucine from 2-oxobutanoate: step 3/4. It functions in the pathway amino-acid biosynthesis; L-valine biosynthesis; L-valine from pyruvate: step 3/4. Functionally, functions in the biosynthesis of branched-chain amino acids. Catalyzes the dehydration of (2R,3R)-2,3-dihydroxy-3-methylpentanoate (2,3-dihydroxy-3-methylvalerate) into 2-oxo-3-methylpentanoate (2-oxo-3-methylvalerate) and of (2R)-2,3-dihydroxy-3-methylbutanoate (2,3-dihydroxyisovalerate) into 2-oxo-3-methylbutanoate (2-oxoisovalerate), the penultimate precursor to L-isoleucine and L-valine, respectively. In Pseudoalteromonas atlantica (strain T6c / ATCC BAA-1087), this protein is Dihydroxy-acid dehydratase.